The following is a 288-amino-acid chain: Thiamine-monophosphate kinase (288 aa).

Mg(2+) is bound by residues D20, T30, and D32. D39 provides a ligand contact to substrate. D60 and D107 together coordinate Mg(2+). ATP contacts are provided by residues 106-107 (GD) and R130. Position 188 (D188) interacts with Mg(2+). Position 190 (S190) interacts with ATP. Mg(2+) is bound at residue D191. Substrate is bound at residue W286.

Belongs to the thiamine-monophosphate kinase family.

It catalyses the reaction thiamine phosphate + ATP = thiamine diphosphate + ADP. The protein operates within cofactor biosynthesis; thiamine diphosphate biosynthesis; thiamine diphosphate from thiamine phosphate: step 1/1. Its function is as follows. Catalyzes the ATP-dependent phosphorylation of thiamine-monophosphate (TMP) to form thiamine-pyrophosphate (TPP), the active form of vitamin B1. In Halobacterium salinarum (strain ATCC 700922 / JCM 11081 / NRC-1) (Halobacterium halobium), this protein is Thiamine-monophosphate kinase.